We begin with the raw amino-acid sequence, 190 residues long: Acyl-acyl carrier protein thioesterase ATL3, chloroplastic (190 aa).

A chloroplast-targeting transit peptide spans Met-1 to Gly-49. Asp-66 is a catalytic residue.

It belongs to the 4-hydroxybenzoyl-CoA thioesterase family. Highly expressed in stems and flowers and at lower levels in rosette leaves, cauline leaves and siliques.

The protein resides in the plastid. Its subcellular location is the chloroplast. Acyl-ACP thioesterase involved in the production of fatty acids and beta-keto fatty acids. Can produce fatty acids of long chain (14:1 and 16:1) and beta-keto fatty acids of medium to long chain (8:0, 10:0, 12:0, 12:1, 14:0 and 16:0) when expressed in a heterologous organism (E.coli). Possesses thioesterase activity for lauroyl-ACP (12:0-ACP) in vitro. May play a role in the generation of long fatty acids in the chloroplast. The chain is Acyl-acyl carrier protein thioesterase ATL3, chloroplastic from Arabidopsis thaliana (Mouse-ear cress).